Consider the following 609-residue polypeptide: uncharacterized protein (609 aa).

This sequence belongs to the NodU/CmcH family.

This is an uncharacterized protein from Methanocaldococcus jannaschii (strain ATCC 43067 / DSM 2661 / JAL-1 / JCM 10045 / NBRC 100440) (Methanococcus jannaschii).